A 223-amino-acid polypeptide reads, in one-letter code: Probable 3-beta-hydroxysteroid-Delta(8),Delta(7)-isomerase (223 aa).

Transmembrane regions (helical) follow at residues 28–48 (IVSI…LLFG), 58–78 (LMCW…YFVF), 115–135 (VEGI…YAIA), and 175–195 (FYYY…PSLI). An EXPERA domain is found at 54 to 196 (LDKLLMCWWT…WWVLIPSLIS (143 aa)).

The protein belongs to the EBP family.

It localises to the endoplasmic reticulum membrane. It catalyses the reaction lathosterol = 5alpha-cholest-8-en-3beta-ol. Its pathway is steroid biosynthesis; sterol biosynthesis. Its function is as follows. Catalyzes the conversion of Delta(8)-sterols to their corresponding Delta(7)-isomers. The polypeptide is Probable 3-beta-hydroxysteroid-Delta(8),Delta(7)-isomerase (Arabidopsis thaliana (Mouse-ear cress)).